The chain runs to 411 residues: Phosphopentomutase (411 aa).

Mn(2+) is bound by residues D14, D306, H311, D347, H348, and H359.

Belongs to the phosphopentomutase family. Mn(2+) is required as a cofactor.

It localises to the cytoplasm. The catalysed reaction is 2-deoxy-alpha-D-ribose 1-phosphate = 2-deoxy-D-ribose 5-phosphate. It catalyses the reaction alpha-D-ribose 1-phosphate = D-ribose 5-phosphate. Its pathway is carbohydrate degradation; 2-deoxy-D-ribose 1-phosphate degradation; D-glyceraldehyde 3-phosphate and acetaldehyde from 2-deoxy-alpha-D-ribose 1-phosphate: step 1/2. In terms of biological role, isomerase that catalyzes the conversion of deoxy-ribose 1-phosphate (dRib-1-P) and ribose 1-phosphate (Rib-1-P) to deoxy-ribose 5-phosphate (dRib-5-P) and ribose 5-phosphate (Rib-5-P), respectively. The sequence is that of Phosphopentomutase from Lactococcus lactis subsp. cremoris (strain MG1363).